Here is a 687-residue protein sequence, read N- to C-terminus: Glycine--tRNA ligase beta subunit (687 aa).

The protein belongs to the class-II aminoacyl-tRNA synthetase family. As to quaternary structure, tetramer of two alpha and two beta subunits.

Its subcellular location is the cytoplasm. The enzyme catalyses tRNA(Gly) + glycine + ATP = glycyl-tRNA(Gly) + AMP + diphosphate. This Neisseria gonorrhoeae (strain NCCP11945) protein is Glycine--tRNA ligase beta subunit.